The sequence spans 287 residues: 2-dehydro-3-deoxyphosphooctonate aldolase (287 aa).

The protein belongs to the KdsA family.

Its subcellular location is the cytoplasm. It catalyses the reaction D-arabinose 5-phosphate + phosphoenolpyruvate + H2O = 3-deoxy-alpha-D-manno-2-octulosonate-8-phosphate + phosphate. It participates in carbohydrate biosynthesis; 3-deoxy-D-manno-octulosonate biosynthesis; 3-deoxy-D-manno-octulosonate from D-ribulose 5-phosphate: step 2/3. The protein operates within bacterial outer membrane biogenesis; lipopolysaccharide biosynthesis. The chain is 2-dehydro-3-deoxyphosphooctonate aldolase from Rhodopseudomonas palustris (strain ATCC BAA-98 / CGA009).